The primary structure comprises 216 residues: Adenylate kinase (216 aa).

Residue 10-15 coordinates ATP; that stretch reads GAGKGT. The NMP stretch occupies residues 30–59; that stretch reads STGDIFRKNIKEGTELGKKAKEYMDQGLLV. AMP-binding positions include Thr-31, Arg-36, 57–59, 85–88, and Gln-92; these read LLV and GFPR. Residues 126-163 are LID; sequence GRRICKSCGATYHVEFNPPKVEGVCDVCQGELYQRADD. ATP is bound at residue Arg-127. Residues Cys-130 and Cys-133 each contribute to the Zn(2+) site. Residue 136–137 participates in ATP binding; sequence TY. Residues Cys-150 and Cys-153 each contribute to the Zn(2+) site. Residues Arg-160 and Arg-171 each contribute to the AMP site. Residue Gln-199 participates in ATP binding.

Belongs to the adenylate kinase family. Monomer.

It is found in the cytoplasm. It carries out the reaction AMP + ATP = 2 ADP. It functions in the pathway purine metabolism; AMP biosynthesis via salvage pathway; AMP from ADP: step 1/1. In terms of biological role, catalyzes the reversible transfer of the terminal phosphate group between ATP and AMP. Plays an important role in cellular energy homeostasis and in adenine nucleotide metabolism. This chain is Adenylate kinase, found in Clostridioides difficile (strain 630) (Peptoclostridium difficile).